Reading from the N-terminus, the 232-residue chain is Orotate phosphoribosyltransferase (232 aa).

5-phospho-alpha-D-ribose 1-diphosphate contacts are provided by residues Arg-107, Lys-108, Lys-111, His-113, and 133–141; that span reads EDLTTAGGS. Thr-137 provides a ligand contact to orotate.

The protein belongs to the purine/pyrimidine phosphoribosyltransferase family. PyrE subfamily. Homodimer. Mg(2+) is required as a cofactor.

It catalyses the reaction orotidine 5'-phosphate + diphosphate = orotate + 5-phospho-alpha-D-ribose 1-diphosphate. Its pathway is pyrimidine metabolism; UMP biosynthesis via de novo pathway; UMP from orotate: step 1/2. Functionally, catalyzes the transfer of a ribosyl phosphate group from 5-phosphoribose 1-diphosphate to orotate, leading to the formation of orotidine monophosphate (OMP). The sequence is that of Orotate phosphoribosyltransferase from Sinorhizobium fredii (strain NBRC 101917 / NGR234).